Consider the following 142-residue polypeptide: Protein archease (142 aa).

Positions 12, 141, and 142 each coordinate Ca(2+).

The protein belongs to the archease family.

Functionally, activates the tRNA-splicing ligase complex by facilitating the enzymatic turnover of catalytic subunit RtcB. Acts by promoting the guanylylation of RtcB, a key intermediate step in tRNA ligation. Can also alter the NTP specificity of RtcB such that ATP, dGTP or ITP is used efficiently. The protein is Protein archease of Thermococcus gammatolerans (strain DSM 15229 / JCM 11827 / EJ3).